A 212-amino-acid chain; its full sequence is High frequency lysogenization protein HflD homolog (212 aa).

This sequence belongs to the HflD family.

Its subcellular location is the cytoplasm. It is found in the cell inner membrane. The protein is High frequency lysogenization protein HflD homolog of Stutzerimonas stutzeri (strain A1501) (Pseudomonas stutzeri).